A 302-amino-acid polypeptide reads, in one-letter code: Aspartate carbamoyltransferase catalytic subunit (302 aa).

Carbamoyl phosphate-binding residues include arginine 53 and threonine 54. An L-aspartate-binding site is contributed by lysine 82. Carbamoyl phosphate-binding residues include arginine 103, histidine 131, and glutamine 134. 2 residues coordinate L-aspartate: arginine 164 and arginine 223. Residues leucine 260 and proline 261 each contribute to the carbamoyl phosphate site.

The protein belongs to the aspartate/ornithine carbamoyltransferase superfamily. ATCase family. As to quaternary structure, heterooligomer of catalytic and regulatory chains.

The enzyme catalyses carbamoyl phosphate + L-aspartate = N-carbamoyl-L-aspartate + phosphate + H(+). The protein operates within pyrimidine metabolism; UMP biosynthesis via de novo pathway; (S)-dihydroorotate from bicarbonate: step 2/3. Functionally, catalyzes the condensation of carbamoyl phosphate and aspartate to form carbamoyl aspartate and inorganic phosphate, the committed step in the de novo pyrimidine nucleotide biosynthesis pathway. The polypeptide is Aspartate carbamoyltransferase catalytic subunit (Methanococcus maripaludis (strain DSM 14266 / JCM 13030 / NBRC 101832 / S2 / LL)).